The primary structure comprises 82 residues: MRQGIHPEYQQVLFHDTNADAYFIIGSTIQTKQTREYEGKVYPYVTLDISSASHPFYTGEVRQASNEGRVATFNKRFSRFKR.

It belongs to the bacterial ribosomal protein bL31 family. Type B subfamily. In terms of assembly, part of the 50S ribosomal subunit.

This Acinetobacter baylyi (strain ATCC 33305 / BD413 / ADP1) protein is Large ribosomal subunit protein bL31B.